The chain runs to 466 residues: Ribosomal protein uS12 methylthiotransferase RimO (466 aa).

Positions Pro18 to Pro133 constitute an MTTase N-terminal domain. The [4Fe-4S] cluster site is built by Cys27, Cys63, Cys92, Cys164, Cys168, and Cys171. In terms of domain architecture, Radical SAM core spans Leu150–Ala391. Residues Gln394–Ile466 form the TRAM domain.

This sequence belongs to the methylthiotransferase family. RimO subfamily. [4Fe-4S] cluster is required as a cofactor.

Its subcellular location is the cytoplasm. The enzyme catalyses L-aspartate(89)-[ribosomal protein uS12]-hydrogen + (sulfur carrier)-SH + AH2 + 2 S-adenosyl-L-methionine = 3-methylsulfanyl-L-aspartate(89)-[ribosomal protein uS12]-hydrogen + (sulfur carrier)-H + 5'-deoxyadenosine + L-methionine + A + S-adenosyl-L-homocysteine + 2 H(+). Its function is as follows. Catalyzes the methylthiolation of an aspartic acid residue of ribosomal protein uS12. The sequence is that of Ribosomal protein uS12 methylthiotransferase RimO from Leptothrix cholodnii (strain ATCC 51168 / LMG 8142 / SP-6) (Leptothrix discophora (strain SP-6)).